The sequence spans 93 residues: UPF0473 protein YrzB (93 aa).

Belongs to the UPF0473 family.

The protein is UPF0473 protein YrzB (yrzB) of Bacillus subtilis (strain 168).